Reading from the N-terminus, the 1642-residue chain is Cortactin-binding protein 2 (1642 aa).

5 disordered regions span residues Met1–Ala27, Lys203–Glu222, Ile366–Leu433, Gly446–Ser471, and Arg491–Asp611. A coiled-coil region spans residues Arg119–Lys276. Residues Gly385–Leu394 are compositionally biased toward polar residues. Positions Thr395–Pro407 are enriched in low complexity. An Asymmetric dimethylarginine modification is found at Arg491. The segment covering Ala497 to Pro506 has biased composition (pro residues). Polar residues predominate over residues Thr576–Gln586. 6 ANK repeats span residues Gly702 to Tyr732, Asp736 to Val765, Asn769 to His798, Gly802 to Val831, Asp835 to Gly864, and Glu904 to Arg934. The tract at residues Glu1440–Ser1469 is disordered. Phosphoserine is present on Ser1513. Residues Arg1546–Lys1642 are disordered. Composition is skewed to polar residues over residues Gly1552–Asn1563 and Lys1571–Lys1588. Low complexity predominate over residues Ser1613 to Gln1627.

As to quaternary structure, interacts with CTTN/cortactin SH3 domain. Interacts with STRN, STRN4/zinedin and MOB4/phocein; this interactions mediate the association with the STRIPAK core complex and may regulate dendritic spine distribution of the STRIPAK complex in hippocampal neurons. Activation of glutamate receptors weakens the interaction with STRN and STRN4.

It localises to the cytoplasm. The protein resides in the cell cortex. The protein localises to the cell projection. Its subcellular location is the dendritic spine. Functionally, regulates the dendritic spine distribution of CTTN/cortactin in hippocampal neurons, and thus controls dendritic spinogenesis and dendritic spine maintenance. Associates with the striatin-interacting phosphatase and kinase (STRIPAK) core complex to regulate dendritic spine distribution of the STRIPAK complex in hippocampal neurons. The chain is Cortactin-binding protein 2 (CTTNBP2) from Muntiacus reevesi (Reeves' muntjac).